A 576-amino-acid polypeptide reads, in one-letter code: MADPQTVLARRVQSALGAAFGPEYRDTDPVIRPSQFADFQANVALALAKRLRRSPRDVATAITEHLDISDVCSKVEISGPGFINLTLRDDWIAHQVHDLLTDERLGTPVQESQNIPIDYSAPNVAKEMHVGHLRTTVVGDALARILEFLGHHVIRQNHIGDWGTPFGMLIEHLLEVGEDSAEAAQLKSDPNAFYQAARAKFDSDEDFADRARRRVVALQSGDAETLRLWRDLIELSKIYFNRIYRKLDVTLTDAHLAGESTYNDMLGPVCDELAEKGLAVVSDGALCVFLEGFTGREGKPVPLIIRKSDGGYGYATTDLATIKYRVEQLKADRIIYVVGAPQSLHLRMVYETARQAGWLGNAEPIHVQIGNVLGSDGKILRTRSGAPVRLMALLDEAVERASAVVAQTRPDLDEETRAAIARDVGIGAVKYADLSIAHDTEYVFDFDRMLALNGNTGPYLQYAVARIRSIFRKGGIDPAQVTGPIQVTEPAERALALKLLDFGATVVQVGDTLEPHRLCTYLFDLAQTFTAFYEACPVLKADRDEVRNSRLALTAVTLHTLVKGLDLLGVRAPEQM.

The short motif at 122 to 132 (PNVAKEMHVGH) is the 'HIGH' region element.

It belongs to the class-I aminoacyl-tRNA synthetase family. In terms of assembly, monomer.

It localises to the cytoplasm. It carries out the reaction tRNA(Arg) + L-arginine + ATP = L-arginyl-tRNA(Arg) + AMP + diphosphate. The chain is Arginine--tRNA ligase from Thermobifida fusca (strain YX).